A 339-amino-acid polypeptide reads, in one-letter code: Large ribosomal subunit protein uL29 (339 aa).

A large ribosomal subunit protein uL29 region spans residues 1–96; it reads MNDLTKKSVE…FAKQRKAKIE (96 aa). The interval 97–339 is unknown; sequence QMMAEQQAAE…KTTKKGTGKK (243 aa). Disordered regions lie at residues 129–254 and 311–339; these read VVST…VPTK and KENR…TGKK. Over residues 145-156 the composition is skewed to low complexity; that stretch reads APVAAKKPAAAK. Basic and acidic residues predominate over residues 157–170; sequence DFPKQKDVVEEKTA. Residues 171 to 182 show a composition bias toward low complexity; it reads TGKPAAPSAKKA. Positions 185-210 are enriched in basic and acidic residues; sequence AKKDVAQETKTDKDAALKALIKEKAA. The span at 217-238 shows a compositional bias: low complexity; sequence KSKTSTPSGKTTVTVKSVTSAK. Positions 239–248 are enriched in basic and acidic residues; the sequence is ADIEVPKETS.

It belongs to the universal ribosomal protein uL29 family. Forms homomultimers. Part of the ribosome; radioactive IRS binds to purified ribosomes.

Functionally, specifically binds a DNA inverted repeat sequence (IRS) found downstream of rpsB in one of the ribosomal subunit operons (for genes rpsB, tsf, and unknown gene x). Might be involved in regulation of transcription of the rpsB operon; the IRS may be a control element to attenuate transcription. The polypeptide is Large ribosomal subunit protein uL29 (Spiroplasma citri).